Here is a 555-residue protein sequence, read N- to C-terminus: Sulfite reductase [ferredoxin] 2 (555 aa).

The segment at 1-31 (MTTARPAKARNEGQWALGNREPLNPNEEMKQ) is disordered. Residues 69 to 161 (YTQREQGYDG…AVGLRTTEAC (93 aa)) constitute a cross-link (3'-(S-cysteinyl)-tyrosine (Tyr-Cys)). Residues cysteine 417, cysteine 423, cysteine 463, and cysteine 467 each coordinate [4Fe-4S] cluster. Position 467 (cysteine 467) interacts with siroheme.

It belongs to the nitrite and sulfite reductase 4Fe-4S domain family. In terms of assembly, monomer. The cofactor is siroheme. [4Fe-4S] cluster serves as cofactor.

It catalyses the reaction hydrogen sulfide + 6 oxidized [2Fe-2S]-[ferredoxin] + 3 H2O = sulfite + 6 reduced [2Fe-2S]-[ferredoxin] + 7 H(+). Catalyzes the reduction of sulfite to sulfide, a step in the biosynthesis of sulfur-containing amino acids and cofactors. This chain is Sulfite reductase [ferredoxin] 2 (sir2), found in Mycolicibacterium paratuberculosis (strain ATCC BAA-968 / K-10) (Mycobacterium paratuberculosis).